The following is a 500-amino-acid chain: MSKDFILAVDQGTTSSRAIIFDKKGNIRKIAQKEFTQIYPKSGWVEHDAMEIWGTQSGVMREALEFGRVKPDQIAAIGITNQRETVVVWDKETGDPVYNAIVWQCRRTSSICDEIKRDPQFVKYIKENTGLVVDAYFSGTKVKWILDNVEGAREKANAGKLLMGTIDTWLIWNLTRGKVHATDYSNASRTMLFNINSLEWDKKILDYLNIPESMLPEVKNSSEVFGVTDSHTLGGAEIPIAGVAGDQHAALFGHCCFEKGMAKNTYGTGCFALMNVGDKPVYSDEGLLTTIAWAENGKPTYALEGSVFIAGAVIQWIRDGLGLVRSAEDSEYYATKIDSTNGVYLVPAFVGLGTPYWDMYARGTIVGITRDTKREHIIRAALEAIAYQAKDVLECMKEDTGLDLAGLRVDGGAVQNNFLMQFQSDILQSEISKPKINEITGLGAVFLAGLAVGFWKDKQELKSILTTEKVFEPQKDSQAVAHDYRGWKKAVERSKAWAEC.

Thr13 lines the ADP pocket. Positions 13, 14, and 15 each coordinate ATP. A sn-glycerol 3-phosphate-binding site is contributed by Thr13. Arg17 is a binding site for ADP. Sn-glycerol 3-phosphate-binding residues include Arg83, Glu84, Tyr136, and Asp246. Arg83, Glu84, Tyr136, Asp246, and Gln247 together coordinate glycerol. 2 residues coordinate ADP: Thr268 and Gly311. Thr268, Gly311, Gln315, and Gly412 together coordinate ATP. ADP is bound by residues Gly412 and Asn416.

This sequence belongs to the FGGY kinase family.

It catalyses the reaction glycerol + ATP = sn-glycerol 3-phosphate + ADP + H(+). The protein operates within polyol metabolism; glycerol degradation via glycerol kinase pathway; sn-glycerol 3-phosphate from glycerol: step 1/1. Its activity is regulated as follows. Inhibited by fructose 1,6-bisphosphate (FBP). Functionally, key enzyme in the regulation of glycerol uptake and metabolism. Catalyzes the phosphorylation of glycerol to yield sn-glycerol 3-phosphate. This is Glycerol kinase from Francisella tularensis subsp. novicida (strain U112).